A 435-amino-acid chain; its full sequence is Nucleoredoxin (435 aa).

Ser2 carries the post-translational modification N-acetylserine. One can recognise a Thioredoxin domain in the interval 167 to 321; that stretch reads PKPFREVIAG…VLELSDSNAA (155 aa).

The protein belongs to the nucleoredoxin family. As to quaternary structure, associates with the phosphatase 2A holoenzyme. Interacts with PPP2CA; the interaction is direct. Interacts with DVL1 (via PDZ domain); the interaction is direct and regulated by oxidative stress.

It is found in the cytoplasm. It localises to the cytosol. Its subcellular location is the nucleus. It catalyses the reaction [protein]-dithiol + NAD(+) = [protein]-disulfide + NADH + H(+). It carries out the reaction [protein]-dithiol + NADP(+) = [protein]-disulfide + NADPH + H(+). Functions as a redox-dependent negative regulator of the Wnt signaling pathway, possibly by preventing ubiquitination of DVL3 by the BCR(KLHL12) complex. May also function as a transcriptional regulator act as a regulator of protein phosphatase 2A (PP2A). The sequence is that of Nucleoredoxin (NXN) from Homo sapiens (Human).